The chain runs to 125 residues: Probable prefoldin subunit 6 (125 aa).

It belongs to the prefoldin subunit beta family. Heterohexamer of two PFD-alpha type and four PFD-beta type subunits.

Its function is as follows. Binds specifically to cytosolic chaperonin (c-CPN) and transfers target proteins to it. Binds to nascent polypeptide chain and promotes folding in an environment in which there are many competing pathways for nonnative proteins. This Drosophila melanogaster (Fruit fly) protein is Probable prefoldin subunit 6.